We begin with the raw amino-acid sequence, 399 residues long: MSKGRLFTSESVTEGHPDKICDAISDSVLDALLEQDPKSRVAVETLVTTGQVHVAGEVTTTAYADIPKIVRDRILDIGYDSSTKGFDGASCGVNVAIGAQSPDIAQGVDTAHETRVEGKADPLDLQGAGDQGLMFGYAIGDTPELMPLPIALAHRLARRLTEVRKNGVLDYLRPDGKTQVTIQYDGTTPVRLDTVVLSTQHADGIDLEGTLTPDIREKVVNTVLADLGHETLDTSDYRLLVNPTGKFVLGGPMGDAGLTGRKIIVDTYGGWARHGGGAFSGKDPSKVDRSAAYAMRWVAKNVVAAGLAERVEVQVAYAIGKAAPVGLFVETFGSETVDPAKIEKAIGEVFDLRPAAIVRDLDLLRPIYAPTAAYGHFGRTDIELPWEQTNKVDDLKSAI.

Position 16 (His16) interacts with ATP. Asp18 contacts Mg(2+). Glu44 is a K(+) binding site. Glu57 and Gln100 together coordinate L-methionine. The flexible loop stretch occupies residues 100–110 (QSPDIAQGVDT). ATP-binding positions include 175 to 177 (DGK), 246 to 247 (KF), Asp255, 261 to 262 (RK), Ala278, and Lys282. Position 255 (Asp255) interacts with L-methionine. Lys286 contacts L-methionine. Lys341 is covalently cross-linked (Isoglutamyl lysine isopeptide (Lys-Gln) (interchain with Q-Cter in protein Pup)).

The protein belongs to the AdoMet synthase family. As to quaternary structure, homotetramer; dimer of dimers. Mg(2+) serves as cofactor. K(+) is required as a cofactor.

The protein localises to the cytoplasm. The catalysed reaction is L-methionine + ATP + H2O = S-adenosyl-L-methionine + phosphate + diphosphate. It functions in the pathway amino-acid biosynthesis; S-adenosyl-L-methionine biosynthesis; S-adenosyl-L-methionine from L-methionine: step 1/1. Its function is as follows. Catalyzes the formation of S-adenosylmethionine (AdoMet) from methionine and ATP. The overall synthetic reaction is composed of two sequential steps, AdoMet formation and the subsequent tripolyphosphate hydrolysis which occurs prior to release of AdoMet from the enzyme. This chain is S-adenosylmethionine synthase, found in Mycolicibacterium smegmatis (strain ATCC 700084 / mc(2)155) (Mycobacterium smegmatis).